We begin with the raw amino-acid sequence, 511 residues long: U3 snoRNP-associated protein-like YAOH (511 aa).

Basic residues predominate over residues 1–18 (MAPRPRKRVSRPKPRATS). Residues 1-117 (MAPRPRKRVS…EDEDEGEEAG (117 aa)) form a disordered region. 2 stretches are compositionally biased toward acidic residues: residues 44-53 (EDIESEDSDL) and 66-80 (DDGEEEEEEEEEQET). A compositionally biased stretch (basic and acidic residues) spans 81–105 (AGEKKMRIAKELLKKVTDAARRRRE). WD repeat units lie at residues 158–197 (KHRQPVTAVVLSKDSDKGFSASKDGVIVHWDVETGKSEKY), 217–256 (KRSKQVLALAVSADGRYLASGGLDRHIHLWDVRSREHIQA), 259–298 (GHRGAISCLSFGPDSSELFSGSFDRKIMQWNAEDRTYMNC), 301–339 (GHQNEVLTMDALSKDRLLTVARDRTMHLWKIPEESQLLF), 342–380 (PATASLECCCFIDDKEFLTGSDDGSVELWSIMRKKPTHI), 412–451 (SAQSWVSAIAARRGSDLAASGAANGSVRLWAIEPDSKGIR), and 457–497 (RLDG…QNGV).

This sequence belongs to the WD repeat RRP9 family.

The protein localises to the nucleus. It is found in the nucleolus. In terms of biological role, component of a nucleolar small nuclear ribonucleoprotein particle (snoRNP) thought to participate in the processing and modification of pre-ribosomal RNA. Essential for embryogenesis. The polypeptide is U3 snoRNP-associated protein-like YAOH (Oryza sativa subsp. japonica (Rice)).